The sequence spans 187 residues: Proline-rich protein 29 (187 aa).

A disordered region spans residues 133–187 (HQPPWQGEPRIQHQPPASRQEEVRDVPPPPPPSATGTVGADVPPASDYYDAESLP).

The protein is Proline-rich protein 29 (Prr29) of Mus musculus (Mouse).